The primary structure comprises 419 residues: D-amino acid dehydrogenase (419 aa).

3–17 contacts FAD; the sequence is VLVLGAGVAGVSSVW.

The protein belongs to the DadA oxidoreductase family. The cofactor is FAD.

The catalysed reaction is a D-alpha-amino acid + A + H2O = a 2-oxocarboxylate + AH2 + NH4(+). It participates in amino-acid degradation; D-alanine degradation; NH(3) and pyruvate from D-alanine: step 1/1. Its function is as follows. Oxidative deamination of D-amino acids. This is D-amino acid dehydrogenase from Neisseria gonorrhoeae (strain ATCC 700825 / FA 1090).